A 364-amino-acid chain; its full sequence is Ribosomal RNA large subunit methyltransferase M (364 aa).

Residues Ser-187, 220-223 (CPGG), Asp-239, Asp-259, and Asp-276 each bind S-adenosyl-L-methionine. Lys-305 functions as the Proton acceptor in the catalytic mechanism.

This sequence belongs to the class I-like SAM-binding methyltransferase superfamily. RNA methyltransferase RlmE family. RlmM subfamily. Monomer.

The protein resides in the cytoplasm. The enzyme catalyses cytidine(2498) in 23S rRNA + S-adenosyl-L-methionine = 2'-O-methylcytidine(2498) in 23S rRNA + S-adenosyl-L-homocysteine + H(+). Catalyzes the 2'-O-methylation at nucleotide C2498 in 23S rRNA. The polypeptide is Ribosomal RNA large subunit methyltransferase M (Aeromonas salmonicida (strain A449)).